Reading from the N-terminus, the 602-residue chain is Laccase 1 (602 aa).

A signal peptide spans 1-20 (MDHFARVSLVAALLYTNTWA). 2 Plastocyanin-like domains span residues 30–128 (TWEE…VRPK) and 157–345 (YLVV…RIPN). Residues His78, His80, His108, and His110 each coordinate Cu cation. Asn176, Asn241, Asn264, Asn388, Asn430, Asn454, and Asn470 each carry an N-linked (GlcNAc...) asparagine glycan. The Plastocyanin-like 3 domain occupies 461–584 (NEGLLLRTRN…GGMGMVIMDG (124 aa)). Residues His492, His495, and His497 each contribute to the Cu cation site. Asn512 carries an N-linked (GlcNAc...) asparagine glycan. Cu cation-binding residues include His566, Cys567, His568, and His572.

Belongs to the multicopper oxidase family. Cu cation is required as a cofactor.

Its subcellular location is the cell surface. The protein operates within pigment biosynthesis. Its function is as follows. Laccase; part of the Pks1 gene cluster that mediates the biosynthesis of an anthraquinone derivative pigment that contributes to conidial pigmentation that provides protection from UV radiation, heat and cold stress. The polyketide synthase Pks1 produces 1-acetyl-2,4,6,8-tetrahydroxy-9,10-anthraquinone though condensation of acetyl-CoA with malonyl-CoA. The dehydratase EthD and the laccase Mlac1 further convert the anthraquinone derivative into the final conidial pigment. This Metarhizium album (strain ARSEF 1941) protein is Laccase 1.